Reading from the N-terminus, the 469-residue chain is 6-phospho-beta-galactosidase (469 aa).

5 residues coordinate D-galactose 6-phosphate: Gln19, His116, Asn159, Glu160, and Asn297. Catalysis depends on Glu160, which acts as the Proton donor. The Nucleophile role is filled by Glu375. The D-galactose 6-phosphate site is built by Ser428, Trp429, Lys435, and Tyr437.

It belongs to the glycosyl hydrolase 1 family.

The enzyme catalyses a 6-phospho-beta-D-galactoside + H2O = D-galactose 6-phosphate + an alcohol. The protein operates within carbohydrate metabolism; lactose degradation; D-galactose 6-phosphate and beta-D-glucose from lactose 6-phosphate: step 1/1. The polypeptide is 6-phospho-beta-galactosidase (Streptococcus equi subsp. zooepidemicus (strain MGCS10565)).